The chain runs to 208 residues: Large ribosomal subunit protein uL3 (208 aa).

The segment at Phe117–Pro149 is disordered.

Belongs to the universal ribosomal protein uL3 family. As to quaternary structure, part of the 50S ribosomal subunit. Forms a cluster with proteins L14 and L19.

One of the primary rRNA binding proteins, it binds directly near the 3'-end of the 23S rRNA, where it nucleates assembly of the 50S subunit. The chain is Large ribosomal subunit protein uL3 from Streptococcus equi subsp. equi (strain 4047).